The chain runs to 400 residues: Cytoplasmic polyadenylated homeobox-like protein 2 (400 aa).

A disordered region spans residues 1 to 29 (MSSQAFPAEEDHHNEERQTKKKRKTKHRH). A compositionally biased stretch (basic and acidic residues) spans 9 to 18 (EEDHHNEERQ). A compositionally biased stretch (basic residues) spans 19 to 29 (TKKKRKTKHRH). A DNA-binding region (homeobox) is located at residues 24 to 83 (KTKHRHKFSEELLQELKEIFGENGYPDFTTRKTLANKFDCPVNVINNWFQNNRARLPPEE).

Its subcellular location is the nucleus. In Homo sapiens (Human), this protein is Cytoplasmic polyadenylated homeobox-like protein 2.